Reading from the N-terminus, the 203-residue chain is Large ribosomal subunit protein uL13 (203 aa).

Alanine 2 bears the N-acetylalanine mark. The residue at position 59 (arginine 59) is a Citrulline. Phosphoserine; by ZIPK/DAPK3 is present on serine 77. Arginine 140 bears the Citrulline mark. An N6-acetyllysine modification is found at lysine 191.

Belongs to the universal ribosomal protein uL13 family. Component of the 60S ribosome. Component of the GAIT complex. Interacts with EIF4G1. Phosphorylation at Ser-77 upon interferon-gamma treatment in macrophages involves a DAPK1-DAPK3 kinase cascade and is causing release from the ribosome, association with the GAIT complex and subsequent involvement in transcript-selective translation inhibition. Post-translationally, citrullinated by PADI4.

Its subcellular location is the cytoplasm. Associated with ribosomes but is not required for canonical ribosome function and has extra-ribosomal functions. Component of the GAIT (gamma interferon-activated inhibitor of translation) complex which mediates interferon-gamma-induced transcript-selective translation inhibition in inflammation processes. Upon interferon-gamma activation and subsequent phosphorylation dissociates from the ribosome and assembles into the GAIT complex which binds to stem loop-containing GAIT elements in the 3'-UTR of diverse inflammatory mRNAs (such as ceruplasmin) and suppresses their translation. In the GAIT complex interacts with m7G cap-bound eIF4G at or near the eIF3-binding site and blocks the recruitment of the 43S ribosomal complex. Involved in methylation of rRNA. The chain is Large ribosomal subunit protein uL13 (Rpl13a) from Mus musculus (Mouse).